The chain runs to 26 residues: Melittin (26 aa).

Glycine 1 is modified (N-formylglycine; partial). Glutamine 26 bears the Glutamine amide mark.

Belongs to the melittin family. Monomer (in solution and for integration into membranes), homotetramer (in solution and potentially as a toroidal pore in membranes), and potenially homomultimer (as a toroidal pore in membranes). As to expression, expressed by the venom gland.

The protein localises to the secreted. The protein resides in the target cell membrane. In terms of biological role, main toxin of bee venom with strong hemolytic activity and antimicrobial activity. It has enhancing effects on bee venom phospholipase A2 activity. This amphipathic toxin binds to negatively charged membrane surface and forms pore by inserting into lipid bilayers inducing the leakage of ions and molecules and the enhancement of permeability that ultimately leads to cell lysis. It acts as a voltage-gated pore with higher selectivity for anions over cations. The ion conductance has been shown to be voltage-dependent. Self-association of melittin in membranes is promoted by high ionic strength, but not by the presence of negatively charged lipids. In vivo, intradermal injection into healthy human volunteers produce sharp pain sensation and an inflammatory response. It produces pain by activating primary nociceptor cells directly and indirectly due to its ability to activate plasma membrane phospholipase A2 and its pore-forming activity. The chain is Melittin (MELT) from Apis florea (Dwarf honeybee).